Here is a 660-residue protein sequence, read N- to C-terminus: DNA ligase (660 aa).

NAD(+) is bound by residues 33–37, 82–83, and Glu110; these read DFVYD and SL. Residue Lys112 is the N6-AMP-lysine intermediate of the active site. NAD(+)-binding residues include Arg133, Glu167, Lys281, and Lys305. Zn(2+) is bound by residues Cys396, Cys399, Cys412, and Cys417. The BRCT domain maps to 583-660; the sequence is GENKLLAGKK…SFEDIKSYLD (78 aa).

It belongs to the NAD-dependent DNA ligase family. LigA subfamily. Mg(2+) is required as a cofactor. It depends on Mn(2+) as a cofactor.

It carries out the reaction NAD(+) + (deoxyribonucleotide)n-3'-hydroxyl + 5'-phospho-(deoxyribonucleotide)m = (deoxyribonucleotide)n+m + AMP + beta-nicotinamide D-nucleotide.. Its function is as follows. DNA ligase that catalyzes the formation of phosphodiester linkages between 5'-phosphoryl and 3'-hydroxyl groups in double-stranded DNA using NAD as a coenzyme and as the energy source for the reaction. It is essential for DNA replication and repair of damaged DNA. This is DNA ligase from Borreliella burgdorferi (strain ATCC 35210 / DSM 4680 / CIP 102532 / B31) (Borrelia burgdorferi).